The sequence spans 248 residues: Ubiquinone biosynthesis O-methyltransferase (248 aa).

Residues R41, G72, D93, and M136 each contribute to the S-adenosyl-L-methionine site.

This sequence belongs to the methyltransferase superfamily. UbiG/COQ3 family.

It carries out the reaction a 3-demethylubiquinol + S-adenosyl-L-methionine = a ubiquinol + S-adenosyl-L-homocysteine + H(+). The catalysed reaction is a 3-(all-trans-polyprenyl)benzene-1,2-diol + S-adenosyl-L-methionine = a 2-methoxy-6-(all-trans-polyprenyl)phenol + S-adenosyl-L-homocysteine + H(+). It participates in cofactor biosynthesis; ubiquinone biosynthesis. In terms of biological role, O-methyltransferase that catalyzes the 2 O-methylation steps in the ubiquinone biosynthetic pathway. This chain is Ubiquinone biosynthesis O-methyltransferase, found in Brucella abortus (strain 2308).